The following is a 206-amino-acid chain: Large ribosomal subunit protein uL4 (206 aa).

It belongs to the universal ribosomal protein uL4 family. Part of the 50S ribosomal subunit.

Functionally, one of the primary rRNA binding proteins, this protein initially binds near the 5'-end of the 23S rRNA. It is important during the early stages of 50S assembly. It makes multiple contacts with different domains of the 23S rRNA in the assembled 50S subunit and ribosome. In terms of biological role, forms part of the polypeptide exit tunnel. This is Large ribosomal subunit protein uL4 from Methylobacterium radiotolerans (strain ATCC 27329 / DSM 1819 / JCM 2831 / NBRC 15690 / NCIMB 10815 / 0-1).